A 218-amino-acid chain; its full sequence is THAP domain-containing protein 3 (218 aa).

The THAP-type zinc finger occupies 1–82; sequence MPKSCAARQC…LKHNAVPTVF (82 aa). Disordered regions lie at residues 97 to 120 and 133 to 154; these read GGDS…PEGP and ATEA…PGQP. Residue Ser100 is modified to Phosphoserine. Positions 156–159 match the HCFC1-binding motif (HBM) motif; sequence DHSY.

In terms of assembly, component of a THAP1/THAP3-HCFC1-OGT complex that contains at least, either THAP1 or THAP3, HCFC1 and OGT. Interacts directly with OGT and HCFC1 (via its HBM). As to expression, highest levels in heart, liver and kidney. Lower levels in brain and lung.

Its function is as follows. Component of a THAP1/THAP3-HCFC1-OGT complex that is required for the regulation of the transcriptional activity of RRM1. The protein is THAP domain-containing protein 3 (Thap3) of Mus musculus (Mouse).